The following is a 386-amino-acid chain: Glucose-1-phosphate adenylyltransferase (386 aa).

Alpha-D-glucose 1-phosphate is bound by residues Tyr-99, Gly-164, 179–180, and Ser-190; that span reads EK.

It belongs to the bacterial/plant glucose-1-phosphate adenylyltransferase family. As to quaternary structure, homotetramer.

It carries out the reaction alpha-D-glucose 1-phosphate + ATP + H(+) = ADP-alpha-D-glucose + diphosphate. The protein operates within glycan biosynthesis; glycogen biosynthesis. Involved in the biosynthesis of ADP-glucose, a building block required for the elongation reactions to produce glycogen. Catalyzes the reaction between ATP and alpha-D-glucose 1-phosphate (G1P) to produce pyrophosphate and ADP-Glc. This chain is Glucose-1-phosphate adenylyltransferase, found in Clostridioides difficile (strain 630) (Peptoclostridium difficile).